The chain runs to 865 residues: Leucine--tRNA ligase (865 aa).

The 'HIGH' region motif lies at 41–51 (PYPSGRIHMGH). The 'KMSKS' region signature appears at 614 to 618 (KMSKS). Position 617 (Lys-617) interacts with ATP.

The protein belongs to the class-I aminoacyl-tRNA synthetase family.

It localises to the cytoplasm. The catalysed reaction is tRNA(Leu) + L-leucine + ATP = L-leucyl-tRNA(Leu) + AMP + diphosphate. This Rhodospirillum centenum (strain ATCC 51521 / SW) protein is Leucine--tRNA ligase.